The following is a 109-amino-acid chain: uncharacterized protein (109 aa).

Positions 1 to 19 are cleaved as a signal peptide; the sequence is MKKFALLAGLFVFAPMTWA.

This is an uncharacterized protein from Escherichia coli O6:H1 (strain CFT073 / ATCC 700928 / UPEC).